We begin with the raw amino-acid sequence, 296 residues long: Protease HtpX homolog (296 aa).

The next 2 helical transmembrane spans lie at 14–34 (VFLL…VGYL) and 38–58 (SLVT…VIMI). His-144 contributes to the Zn(2+) binding site. Residue Glu-145 is part of the active site. His-148 is a binding site for Zn(2+). The next 2 helical transmembrane spans lie at 159 to 179 (IALA…NWWL) and 198 to 218 (LLVF…AAVI). Zn(2+) is bound at residue Glu-227.

It belongs to the peptidase M48B family. Zn(2+) is required as a cofactor.

It localises to the cell membrane. The sequence is that of Protease HtpX homolog from Leuconostoc citreum (strain KM20).